The following is a 783-amino-acid chain: Lon protease (783 aa).

The region spanning 11 to 203 (IPVLPLRDVV…FLMGQMESEI (193 aa)) is the Lon N-terminal domain. 355-362 (GPPGVGKT) lines the ATP pocket. A Lon proteolytic domain is found at 591–772 (SNRIGQVTGL…DEVLKVALER (182 aa)). Residues S678 and K721 contribute to the active site.

This sequence belongs to the peptidase S16 family. As to quaternary structure, homohexamer. Organized in a ring with a central cavity.

It is found in the cytoplasm. The catalysed reaction is Hydrolysis of proteins in presence of ATP.. Its function is as follows. ATP-dependent serine protease that mediates the selective degradation of mutant and abnormal proteins as well as certain short-lived regulatory proteins. Required for cellular homeostasis and for survival from DNA damage and developmental changes induced by stress. Degrades polypeptides processively to yield small peptide fragments that are 5 to 10 amino acids long. Binds to DNA in a double-stranded, site-specific manner. Regulates swarmer cell differentiation of V.parahaemolyticus. This Vibrio parahaemolyticus serotype O3:K6 (strain RIMD 2210633) protein is Lon protease.